The following is an 88-amino-acid chain: MRLDKYLKVSRIIKRRTVAKEVADKGRIKVNGILAKSSTDLKVNDQVEIRFGNKLLLVKVLEMKDSTKKEDAAGMYEIISETRVEENV.

One can recognise an S4 RNA-binding domain in the interval 1 to 60 (MRLDKYLKVSRIIKRRTVAKEVADKGRIKVNGILAKSSTDLKVNDQVEIRFGNKLLLVKV).

The protein belongs to the RqcP family. As to quaternary structure, associates with stalled 50S ribosomal subunits. Binds to RqcH, 23S rRNA and the P-site tRNA. Does not require RqcH for association with 50S subunits.

In terms of biological role, key component of the ribosome quality control system (RQC), a ribosome-associated complex that mediates the extraction of incompletely synthesized nascent chains from stalled ribosomes and their subsequent degradation. RqcH recruits Ala-charged tRNA, and with RqcP directs the elongation of stalled nascent chains on 50S ribosomal subunits, leading to non-templated C-terminal alanine extensions (Ala tail). The Ala tail promotes nascent chain degradation. RqcP is associated with the translocation-like movement of the peptidyl-tRNA from the A-site into the P-site. This Streptococcus pneumoniae (strain ATCC BAA-255 / R6) protein is RQC P-site tRNA stabilizing factor.